The following is a 183-amino-acid chain: MGSSTSTPAPPPKKNKPEGRKADNQILNSYQKSIVRNAWRHMSQKGPSNCGSTITRRMMARKSTIGDILDRSTLDYHNLQIVEFLQKVMQSLDEPDKISKLCQEIGQKHAKYRRSKGMKIDYWDKLGEAITETIREYQGWKIHRESLRAATVLVSYVVDQLRFGYSRGLHVQGSRETKEDDEE.

The interval 1–25 is disordered; the sequence is MGSSTSTPAPPPKKNKPEGRKADNQ. Gly2 carries the N-myristoyl glycine lipid modification. The short motif at 12–18 is the Nuclear localization signal element; it reads PKKNKPE. In terms of domain architecture, Globin spans 26–166; that stretch reads ILNSYQKSIV…VVDQLRFGYS (141 aa). Residues His77 and His109 each coordinate heme.

This sequence belongs to the globin family. In terms of assembly, homodimer. Occurs in an equilibrium of monomeric and dimeric forms in solution. In terms of tissue distribution, detected in the head mesodermal cell. In the tail region, detected in the stomatointestinal and anal depressor muscle cells.

It localises to the cytoplasm. It is found in the nucleus lamina. The protein resides in the cell membrane. Functionally, plays a role in electron transport. Utilizes the bis-histidyl hexacoordinated complex with iron to transfer electrons to cytochrome c and molecular oxygen. Plays a regulatory role in the periodicity of the defecation cycle under oxidative stress conditions. Not involved in imparting protection against general conditions of oxidative stress. May participate in redox reactions under anaerobic conditions. This chain is Globin-like protein 26, found in Caenorhabditis elegans.